Consider the following 213-residue polypeptide: Achelase-1 (213 aa).

Residues 1–213 (IVGGSVTTIG…RYTSWIQSNA (213 aa)) enclose the Peptidase S1 domain. Cys26 and Cys42 are oxidised to a cystine. Residues His41 and Asp86 each act as charge relay system in the active site. The cysteines at positions 155 and 172 are disulfide-linked. Ser188 serves as the catalytic Charge relay system.

This sequence belongs to the peptidase S1 family. As to expression, hemolymph and saliva of the larval form (caterpillar).

It is found in the secreted. The protein resides in the extracellular space. Sensitive to serine proteinase inhibitors and thiol proteinase inhibitors. In terms of biological role, fibrinolytic activity; shows preferential cleavage of Arg-Gly bonds in all three fibrinogen chains. Contact with the caterpillars causes severe bleeding, due the anticoagulant effect of the protein. This chain is Achelase-1, found in Lonomia achelous (Giant silkworm moth).